Here is a 688-residue protein sequence, read N- to C-terminus: Zinc finger and BTB domain-containing protein 48 (688 aa).

The BTB domain maps to 26 to 89 (CDATLDVGGL…FYTGHLALTS (64 aa)). The tract at residues 119–140 (SVGQAAGGQSGLGPPASQNVNS) is disordered. K143 participates in a covalent cross-link: Glycyl lysine isopeptide (Lys-Gly) (interchain with G-Cter in SUMO2). The interval 161–192 (PRDQEPRGSHSPQRPQLHSPAQSEGPSSLCGK) is disordered. Residues S169, S171, and S179 each carry the phosphoserine modification. A compositionally biased stretch (polar residues) spans 170 to 186 (HSPQRPQLHSPAQSEGP). K263 participates in a covalent cross-link: Glycyl lysine isopeptide (Lys-Gly) (interchain with G-Cter in SUMO2). The segment at 291 to 313 (VECPTCHKKFLSKYYLKVHNRKH) adopts a C2H2-type 1 zinc-finger fold. 16 residues coordinate Zn(2+): C293, C296, H309, H313, C321, C324, H337, C342, C352, C355, H368, H372, C380, C383, H396, and H401. Residues 319–344 (FECPKCGKCYFRKENLLEHEARNCMN) form a CCHC-type zinc finger. 9 consecutive C2H2-type zinc fingers follow at residues 350-372 (FTCS…MVSH), 378-401 (YKCS…IKLH), 407-430 (HACP…AFKH), 436-459 (FVCE…KAKH), 465-487 (HVCE…LRTH), 493-515 (FQCH…NRTH), 521-544 (FSCE…ASRH), 550-572 (HFCQ…VRRH), and 578-600 (FECT…MEIH). Zn(2+)-binding residues include C552, C555, H568, C580, C583, H596, and H600.

The protein belongs to the krueppel C2H2-type zinc-finger protein family. Interacts with EP300. Detected in adrenal gland and neuroblastoma.

The protein localises to the nucleus. It is found in the chromosome. The protein resides in the telomere. Functionally, plays a critical role in transcriptional regulation and chromatin remodeling. Acts as a regulator of telomere length. Directly binds the telomeric double-stranded 5'-TTAGGG-3' repeat. Preferentially binds to telomeres that have a low concentration of shelterin complex and acts as a regulator of telomere length by initiating telomere trimming, a process that prevents the accumulation of aberrantly long telomeres. Also acts as a transcription regulator that binds to promoter regions. Regulates expression of a small subset of genes, including MTFP1. Acts as a negative regulator of cell proliferation by specifically activating expression of ARF, a tumor suppressor isoform of CDKN2A. Acts as a transcription regulator of CIITA, the major factor regulating MHC class II gene expression. In addition, regulates cellular m6A/m6Am methylation on RNA by facilitating the recruitment of the RNA demethylase, FTO, to target mRNAs. This is Zinc finger and BTB domain-containing protein 48 from Homo sapiens (Human).